The following is a 234-amino-acid chain: Phosphoribosylaminoimidazole-succinocarboxamide synthase (234 aa).

It belongs to the SAICAR synthetase family.

The enzyme catalyses 5-amino-1-(5-phospho-D-ribosyl)imidazole-4-carboxylate + L-aspartate + ATP = (2S)-2-[5-amino-1-(5-phospho-beta-D-ribosyl)imidazole-4-carboxamido]succinate + ADP + phosphate + 2 H(+). It functions in the pathway purine metabolism; IMP biosynthesis via de novo pathway; 5-amino-1-(5-phospho-D-ribosyl)imidazole-4-carboxamide from 5-amino-1-(5-phospho-D-ribosyl)imidazole-4-carboxylate: step 1/2. This Staphylococcus aureus (strain MRSA252) protein is Phosphoribosylaminoimidazole-succinocarboxamide synthase.